A 159-amino-acid chain; its full sequence is Ribosomal RNA large subunit methyltransferase H (159 aa).

S-adenosyl-L-methionine contacts are provided by residues Leu76, Gly108, and 127–132 (FSPMTF).

Belongs to the RNA methyltransferase RlmH family. In terms of assembly, homodimer.

It localises to the cytoplasm. It carries out the reaction pseudouridine(1915) in 23S rRNA + S-adenosyl-L-methionine = N(3)-methylpseudouridine(1915) in 23S rRNA + S-adenosyl-L-homocysteine + H(+). In terms of biological role, specifically methylates the pseudouridine at position 1915 (m3Psi1915) in 23S rRNA. In Alkaliphilus metalliredigens (strain QYMF), this protein is Ribosomal RNA large subunit methyltransferase H.